A 1135-amino-acid chain; its full sequence is Envelopment polyprotein (1135 aa).

A signal peptide spans 1-18 (MGIWKWLVMASLVWPVLT). Residues 19-485 (LRNVYDMKIE…VPGFHGWATA (467 aa)) are Lumenal-facing. Intrachain disulfides connect Cys-29-Cys-151, Cys-63-Cys-157, Cys-109-Cys-128, Cys-133-Cys-138, Cys-175-Cys-185, Cys-210-Cys-247, Cys-234-Cys-351, Cys-376-Cys-435, Cys-380-Cys-389, Cys-405-Cys-424, and Cys-452-Cys-475. N-linked (GlcNAc...) asparagine; by host glycosylation occurs at Asn-134. Residues Asn-235 and Asn-347 are each glycosylated (N-linked (GlcNAc...) asparagine; by host). An N-linked (GlcNAc...) asparagine; by host glycan is attached at Asn-399. A helical transmembrane segment spans residues 486–506 (ALLVTFCFGWVLIPAITFIIL). At 507 to 627 (TVLKFIANIF…LNLFRYKSRC (121 aa)) the chain is on the cytoplasmic side. The binding to the ribonucleoprotein stretch occupies residues 516 to 533 (FHTSNQENRLKSVLRKIK). CCHC-type zinc fingers lie at residues 545-565 (CDVC…GVSC) and 570-591 (CPYC…YKVC). 3 binding to the ribonucleoprotein regions span residues 588 to 605 (YKVC…KKTV), 592 to 603 (QVTHRFRDDLKK), and 611 to 625 (TPGC…RYKS). An ITAM domain is found at 611 to 634 (TPGCYRTLNLFRYKSRCYIFTMWI). The YxxL motif lies at 615-618 (YRTL). The chain crosses the membrane as a helical span at residues 628-648 (YIFTMWIFLLVLESILWAASA). Topologically, residues 649-1105 (SETPLTPVWN…EWISGIFSGN (457 aa)) are lumenal. Cystine bridges form between Cys-735–Cys-770, Cys-739–Cys-777, Cys-751–Cys-885, Cys-765–Cys-896, Cys-780–Cys-904, Cys-806–Cys-815, Cys-823–Cys-832, and Cys-863–Cys-867. The segment at 757-777 (YQYETSWGCNPSDCPGVGTGC) is fusion loop. N-linked (GlcNAc...) asparagine; by host glycosylation is present at Asn-928. Cystine bridges form between Cys-970-Cys-1000, Cys-993-Cys-1045, Cys-1010-Cys-1015, Cys-1046-Cys-1051, and Cys-1085-Cys-1089. The helical transmembrane segment at 1106 to 1126 (WIVLIVLCVFLLFSLVLLSIL) threads the bilayer. The binding to the ribonucleoprotein stretch occupies residues 1122–1135 (LLSILCPVRKHKKS). Topologically, residues 1127 to 1135 (CPVRKHKKS) are cytoplasmic.

The protein belongs to the hantavirus envelope glycoprotein family. In terms of assembly, homodimer. Homotetramer; forms heterotetrameric Gn-Gc spikes in the pre-fusion conformation. Interacts (via C-terminus) with the nucleoprotein. Interacts with host TUFM; this interaction contributes to the virus-induced degradation of mitochondria by autophagy, which leads to degradation of host MAVS and inhibition of type I interferon (IFN) responses. Interacts with host MAP1LC3B; this interaction contributes to the virus-induced degradation of mitochondria by autophagy, which leads to degradation of host MAVS and inhibition of type I interferon (IFN) responses. As to quaternary structure, homotetramer; forms heterotetrameric Gn-Gc spikes in the pre-fusion conformation. Homotrimer; forms homotrimer in the post-fusion conformation at acidic pH. Interacts (via C-terminus) with the nucleoprotein. Specific enzymatic cleavage in vivo yield the mature proteins Glycoprotein N and Glycoprotein C.

It localises to the virion membrane. Its subcellular location is the host cell surface. It is found in the host Golgi apparatus membrane. The protein resides in the host endoplasmic reticulum membrane. The protein localises to the host mitochondrion. Its function is as follows. Forms homotetramers with glycoprotein C at the surface of the virion. Attaches the virion to host cell receptors including integrin ITGAV/ITGB3. This attachment induces virion internalization predominantly through clathrin-dependent endocytosis. May also bind to host C1QBP for virus entry into the host cell. Mediates the assembly and budding of infectious virus particles through its interaction with the nucleocapsid protein and the viral genome. May dysregulate normal immune and endothelial cell responses through an ITAM motif. Translocates to mitochondria, binds to host TUFM and recruits MAP1LC3B. These interactions induce mitochondrial autophagy and therefore destruction of host MAVS leading to inhibition of type I interferon (IFN) responses. Concomitant breakdown of glycoprotein N is apparently prevented by the nucleoprotein that may inhibit Gn-stimulated autophagosome-lysosome fusion. Interacts with the viral genomic RNA. Homodimer. Homotetramer; forms heterotetrameric Gn-Gc spikes in the pre-fusion conformation. Attaches the virion to host cell receptors including integrin ITGAV/ITGB3. This attachment induces virion internalization predominantly through clathrin-dependent endocytosis. May also bind to host C1QBP for virus entry into the host cell. Class II fusion protein that promotes fusion of viral membrane with host endosomal membrane after endocytosis of the virion. The polypeptide is Envelopment polyprotein (GP) (Apodemus agrarius (Eurasian field mouse)).